The following is a 152-amino-acid chain: Flagellar assembly factor FliW (152 aa).

It belongs to the FliW family. In terms of assembly, interacts with translational regulator CsrA and flagellin(s).

It is found in the cytoplasm. Functionally, acts as an anti-CsrA protein, binds CsrA and prevents it from repressing translation of its target genes, one of which is flagellin. Binds to flagellin and participates in the assembly of the flagellum. This chain is Flagellar assembly factor FliW, found in Caldicellulosiruptor saccharolyticus (strain ATCC 43494 / DSM 8903 / Tp8T 6331).